A 770-amino-acid chain; its full sequence is Tripartite terminase subunit 1 (770 aa).

Residues 199 to 227 (CAICFEELCITANQGETLHRRLLGCICDH) form a C3H1-type zinc finger. Residue 675–682 (FTSVFHCG) coordinates ATP.

The protein belongs to the herpesviridae TRM1 protein family. Associates with TRM2 and TRM3 to form the tripartite terminase complex. Interacts with portal protein.

The protein localises to the host nucleus. Its function is as follows. Component of the molecular motor that translocates viral genomic DNA in empty capsid during DNA packaging. Forms a tripartite terminase complex together with TRM2 and TRM3 in the host cytoplasm. Once the complex reaches the host nucleus, it interacts with the capsid portal vertex. This portal forms a ring in which genomic DNA is translocated into the capsid. TRM1 carries an endonuclease activity that plays an important role for the cleavage of concatemeric viral DNA into unit length genomes. This is Tripartite terminase subunit 1 from Varicella-zoster virus (strain Dumas) (HHV-3).